A 1140-amino-acid chain; its full sequence is Eukaryotic translation initiation factor 3 subunit A (1140 aa).

Residues 319–502 (LQRMAAHVLL…HCIYFGTDLT (184 aa)) form the PCI domain. 6 stretches are compositionally biased toward basic and acidic residues: residues 590 to 624 (NNAR…EERE), 826 to 903 (RMAQ…RPEG), 925 to 965 (DRAD…KDNE), 1000 to 1019 (SRDD…DFRN), 1026 to 1053 (RGGD…EQQR), and 1061 to 1087 (DAPR…RDVR). Disordered stretches follow at residues 590–632 (NNAR…QNEI) and 826–1140 (RMAQ…VKRR). The segment covering 1091-1101 (PKEGGGGGGGN) has biased composition (gly residues). The segment covering 1108–1130 (PRDEKPTTKQRDQPQDKENKAGD) has biased composition (basic and acidic residues).

The protein belongs to the eIF-3 subunit A family. Component of the eukaryotic translation initiation factor 3 (eIF-3) complex. The eIF-3 complex interacts with pix.

The protein resides in the cytoplasm. In terms of biological role, RNA-binding component of the eukaryotic translation initiation factor 3 (eIF-3) complex, which is involved in protein synthesis of a specialized repertoire of mRNAs and, together with other initiation factors, stimulates binding of mRNA and methionyl-tRNAi to the 40S ribosome. The eIF-3 complex specifically targets and initiates translation of a subset of mRNAs involved in cell proliferation. The protein is Eukaryotic translation initiation factor 3 subunit A of Drosophila willistoni (Fruit fly).